Here is an 883-residue protein sequence, read N- to C-terminus: Translation initiation factor IF-2 (883 aa).

Disordered stretches follow at residues lysine 52–glutamate 102 and valine 115–proline 297. Basic and acidic residues-rich tracts occupy residues valine 115–threonine 179 and alanine 204–alanine 237. Residues lysine 239 to lysine 248 are compositionally biased toward low complexity. Over residues proline 265–arginine 275 the composition is skewed to basic residues. Low complexity predominate over residues arginine 276–lysine 285. In terms of domain architecture, tr-type G spans proline 383–glutamate 550. Residues glycine 392–threonine 399 form a G1 region. Glycine 392–threonine 399 is a binding site for GTP. Residues glycine 417–histidine 421 form a G2 region. The interval aspartate 438–glycine 441 is G3. GTP-binding positions include aspartate 438–histidine 442 and asparagine 492–aspartate 495. The interval asparagine 492 to aspartate 495 is G4. The tract at residues serine 528 to lysine 530 is G5.

The protein belongs to the TRAFAC class translation factor GTPase superfamily. Classic translation factor GTPase family. IF-2 subfamily.

The protein resides in the cytoplasm. In terms of biological role, one of the essential components for the initiation of protein synthesis. Protects formylmethionyl-tRNA from spontaneous hydrolysis and promotes its binding to the 30S ribosomal subunits. Also involved in the hydrolysis of GTP during the formation of the 70S ribosomal complex. The polypeptide is Translation initiation factor IF-2 (Alkalilimnicola ehrlichii (strain ATCC BAA-1101 / DSM 17681 / MLHE-1)).